Here is a 311-residue protein sequence, read N- to C-terminus: Transcriptional repressor scratch 2 (311 aa).

The interval 1-20 is SNAG domain; the sequence is MPRSFLVKKIKADGFQCSGV. 2 disordered regions span residues 71-90 and 120-156; these read PAYPAAASEEYSDPESPQSS and RRRAGAGGDAAGAGDAGGGGGGGGGGERAGRSGATAG. Over residues 124–146 the composition is skewed to gly residues; sequence GAGGDAAGAGDAGGGGGGGGGGE. 4 C2H2-type zinc fingers span residues 161–183, 192–214, 218–240, and 246–268; these read HACAECGKTYATSSNLSRHKQTH, RKCPTCGKAYVSMPALAMHVLTH, HKCGVCGKAFSRPWLLQGHMRSH, and FGCAHCGKAFADRSNLRAHMQTH. The C2H2-type 5; atypical zinc finger occupies 274-297; the sequence is YRCRQCDKSFALKSYLHKHCEAAC.

It belongs to the snail C2H2-type zinc-finger protein family.

It is found in the nucleus. Its function is as follows. May be involved in transcriptional regulation. The polypeptide is Transcriptional repressor scratch 2 (Scrt2) (Mus musculus (Mouse)).